The sequence spans 348 residues: Nicotinate-nucleotide--dimethylbenzimidazole phosphoribosyltransferase (348 aa).

The active-site Proton acceptor is glutamate 317.

The protein belongs to the CobT family.

The catalysed reaction is 5,6-dimethylbenzimidazole + nicotinate beta-D-ribonucleotide = alpha-ribazole 5'-phosphate + nicotinate + H(+). It functions in the pathway nucleoside biosynthesis; alpha-ribazole biosynthesis; alpha-ribazole from 5,6-dimethylbenzimidazole: step 1/2. Its function is as follows. Catalyzes the synthesis of alpha-ribazole-5'-phosphate from nicotinate mononucleotide (NAMN) and 5,6-dimethylbenzimidazole (DMB). This is Nicotinate-nucleotide--dimethylbenzimidazole phosphoribosyltransferase from Clostridioides difficile (strain 630) (Peptoclostridium difficile).